The sequence spans 188 residues: MENIMPFALLGLCVGLAAGTEGAVVKDFDISKFLGFWYEIAFASKMGTPGLAHKEEKMGAMVVELKENLLALTTTYYSEDHCVLEKVTATEGDGPAKFQVTRLSGKKEVVVEATDYLTYAIIDITSLVAGAVHRTMKLYSRSLDDNGEALYNFRKITSDHGFSETDLYILKHDLTCVKVLQSAAESRP.

An N-terminal signal peptide occupies residues 1–19; that stretch reads MENIMPFALLGLCVGLAAG. Cys82 and Cys176 form a disulfide bridge.

It belongs to the calycin superfamily. Lipocalin family. Post-translationally, there are two similar, immunologically cross-reacting forms of this protein, designated B and C, which probably result from different processing of the amino end. The N-terminus of form C is probably blocked. Synthesized exclusively in the proximal part (caput epididymidis) of the epididymis. It makes up a substantial part of the total protein in the epididymal luminal fluid and binds to the sperm membrane.

The protein resides in the secreted. Associates with spermatozoa in the epididymal fluid but does not bind tightly to them. Binds both all-trans and 9-cis retinoic acid. May act as a retinoid carrier protein which is required for epididymal function and/or sperm maturation. This Rattus norvegicus (Rat) protein is Epididymal-specific lipocalin-5 (Lcn5).